Reading from the N-terminus, the 89-residue chain is Large ribosomal subunit protein eL43 (89 aa).

The interval 1 to 28 (MVKKSKVGSTGRFGARYGRKAKRTVKDI) is disordered. The C4-type zinc finger occupies 38–59 (CPKCDRPGVKRTHAGIWKCRKC).

The protein belongs to the eukaryotic ribosomal protein eL43 family. Zn(2+) serves as cofactor.

This chain is Large ribosomal subunit protein eL43, found in Methanosphaera stadtmanae (strain ATCC 43021 / DSM 3091 / JCM 11832 / MCB-3).